We begin with the raw amino-acid sequence, 731 residues long: Cell death abnormality protein 12 (731 aa).

The 147-residue stretch at 339–485 folds into the ELMO domain; sequence AEVQKILDIE…VVLEQLRHVL (147 aa). One can recognise a PH domain in the interval 544 to 679; it reads VRINHLNYLK…WLEGLAELIG (136 aa). The SH3-binding signature appears at 715–718; sequence PEIP.

As to quaternary structure, interacts with psr-1. Forms a ternary complex with ced-2 and ced-5.

Its subcellular location is the cytoplasm. Involved in programmed apoptosis and necrosis. Required for the cell corpse engulfment process. Has roles in the formation of actin halos and distal tip cell migration. Negatively regulates the unc-6/Netrin receptor unc-5 to control distal tip cell migration along the anterior-posterior axis of the body. Plays no role in amphid axon outgrowth. This chain is Cell death abnormality protein 12, found in Caenorhabditis elegans.